A 1192-amino-acid chain; its full sequence is DNA topoisomerase 2 (1192 aa).

Residues asparagine 64, asparagine 95, and 142-149 (GTNGVGLK) contribute to the ATP site. 3 residues coordinate Mg(2+): glutamate 438, aspartate 539, and aspartate 541. The region spanning 707–1174 (IPNFLDGMTR…PGASVWLEEI (468 aa)) is the Topo IIA-type catalytic domain. The O-(5'-phospho-DNA)-tyrosine intermediate role is filled by tyrosine 800.

Belongs to the type II topoisomerase family. Mg(2+) is required as a cofactor. Requires Mn(2+) as cofactor. It depends on Ca(2+) as a cofactor.

It is found in the host cytoplasm. It catalyses the reaction ATP-dependent breakage, passage and rejoining of double-stranded DNA.. In terms of biological role, type II topoisomerase. Processively relaxes supercoiled DNA. Displays DNA-supercoiling activity only when associated with the viral histone-like protein. This is DNA topoisomerase 2 from Ornithodoros (relapsing fever ticks).